A 366-amino-acid chain; its full sequence is tRNA/tmRNA (uracil-C(5))-methyltransferase (366 aa).

The S-adenosyl-L-methionine site is built by Q190, Y218, N223, E239, and D299. The active-site Nucleophile is C324. E358 (proton acceptor) is an active-site residue.

It belongs to the class I-like SAM-binding methyltransferase superfamily. RNA M5U methyltransferase family. TrmA subfamily.

It catalyses the reaction uridine(54) in tRNA + S-adenosyl-L-methionine = 5-methyluridine(54) in tRNA + S-adenosyl-L-homocysteine + H(+). The enzyme catalyses uridine(341) in tmRNA + S-adenosyl-L-methionine = 5-methyluridine(341) in tmRNA + S-adenosyl-L-homocysteine + H(+). Its function is as follows. Dual-specificity methyltransferase that catalyzes the formation of 5-methyluridine at position 54 (m5U54) in all tRNAs, and that of position 341 (m5U341) in tmRNA (transfer-mRNA). This is tRNA/tmRNA (uracil-C(5))-methyltransferase from Escherichia coli (strain ATCC 8739 / DSM 1576 / NBRC 3972 / NCIMB 8545 / WDCM 00012 / Crooks).